Reading from the N-terminus, the 975-residue chain is Aminopeptidase N (975 aa).

The Cytoplasmic segment spans residues 1-11 (MAKGFYISKAL). A helical; Signal-anchor for type II membrane protein transmembrane segment spans residues 12–32 (GILAIVLGIAAVSTIIALSVV). Positions 33–74 (YAQEKNKNAESSPVSSPVSSPVSSPVSPTNPSTTAATTLAQS) are cytosolic Ser/Thr-rich junction. The Extracellular portion of the chain corresponds to 33–975 (YAQEKNKNAE…VLQWFRENSQ (943 aa)). Residues 41–68 (AESSPVSSPVSSPVSSPVSPTNPSTTAA) form a disordered region. The segment covering 43–59 (SSPVSSPVSSPVSSPVS) has biased composition (low complexity). The metalloprotease stretch occupies residues 75-975 (KPWNHYRLPK…VLQWFRENSQ (901 aa)). An N-linked (GlcNAc...) asparagine glycan is attached at N134. Y182 bears the Sulfotyrosine mark. N240 and N271 each carry an N-linked (GlcNAc...) asparagine glycan. 358-362 (GAMEN) serves as a coordination point for substrate. Residue H394 coordinates Zn(2+). The active-site Proton acceptor is the E395. H398 and E417 together coordinate Zn(2+). Y425 and Y430 each carry sulfotyrosine. Residues N533, N580, N633, N689, and N747 are each glycosylated (N-linked (GlcNAc...) asparagine). Intrachain disulfides connect C769–C776 and C806–C842. N826 carries N-linked (GlcNAc...) asparagine glycosylation.

This sequence belongs to the peptidase M1 family. As to quaternary structure, (Microbial infection) Interacts with CCoV spike glycoprotein. Homodimer. Interacts with SLC6A19. Zn(2+) serves as cofactor. Sulfated. In terms of processing, N- and O-glycosylated. Post-translationally, may undergo proteolysis and give rise to a soluble form.

It is found in the cell membrane. It carries out the reaction Release of an N-terminal amino acid, Xaa-|-Yaa- from a peptide, amide or arylamide. Xaa is preferably Ala, but may be most amino acids including Pro (slow action). When a terminal hydrophobic residue is followed by a prolyl residue, the two may be released as an intact Xaa-Pro dipeptide.. Its function is as follows. Broad specificity aminopeptidase which plays a role in the final digestion of peptides generated from hydrolysis of proteins by gastric and pancreatic proteases. Also involved in the processing of various peptides including peptide hormones, such as angiotensin III and IV, neuropeptides, and chemokines. May also be involved the cleavage of peptides bound to major histocompatibility complex class II molecules of antigen presenting cells. May have a role in angiogenesis and promote cholesterol crystallization. May have a role in amino acid transport by acting as binding partner of amino acid transporter SLC6A19 and regulating its activity. Functionally, (Microbial infection) Probable receptor for canine coronavirus (CCoV). This is Aminopeptidase N (ANPEP) from Canis lupus familiaris (Dog).